The chain runs to 132 residues: MKALTSNVSKALPIGATLQCVDNTGAREIQIISVKGFKGVRRRLDVAGVGDLVVASVKKGTADMRREVVNAVVIRQKKEYMRADGLRVKFEDNAAVIITPEGILKGSEVRGPVAKEAADRWPSVGSAASILV.

The protein belongs to the universal ribosomal protein uL14 family. As to quaternary structure, part of the 50S ribosomal subunit. Forms a cluster with proteins L3 and L24e, part of which may contact the 16S rRNA in 2 intersubunit bridges.

Functionally, binds to 23S rRNA. Forms part of two intersubunit bridges in the 70S ribosome. The chain is Large ribosomal subunit protein uL14 from Methanobrevibacter smithii (strain ATCC 35061 / DSM 861 / OCM 144 / PS).